Consider the following 258-residue polypeptide: Indole-3-glycerol phosphate synthase (258 aa).

The protein belongs to the TrpC family.

It carries out the reaction 1-(2-carboxyphenylamino)-1-deoxy-D-ribulose 5-phosphate + H(+) = (1S,2R)-1-C-(indol-3-yl)glycerol 3-phosphate + CO2 + H2O. It participates in amino-acid biosynthesis; L-tryptophan biosynthesis; L-tryptophan from chorismate: step 4/5. This chain is Indole-3-glycerol phosphate synthase, found in Legionella pneumophila (strain Lens).